The following is a 93-amino-acid chain: NADH-ubiquinone oxidoreductase chain 4L (93 aa).

3 helical membrane passes run 3 to 23 (LTIL…GPLG), 27 to 47 (IIKL…LIIL), and 55 to 75 (ILGL…SAIG).

It belongs to the complex I subunit 4L family.

The protein localises to the mitochondrion membrane. It catalyses the reaction a ubiquinone + NADH + 5 H(+)(in) = a ubiquinol + NAD(+) + 4 H(+)(out). Its function is as follows. Core subunit of the mitochondrial membrane respiratory chain NADH dehydrogenase (Complex I) that is believed to belong to the minimal assembly required for catalysis. Complex I functions in the transfer of electrons from NADH to the respiratory chain. The immediate electron acceptor for the enzyme is believed to be ubiquinone. The sequence is that of NADH-ubiquinone oxidoreductase chain 4L (ND4L) from Wickerhamomyces canadensis (Yeast).